The following is a 223-amino-acid chain: Putative 3-methyladenine DNA glycosylase (223 aa).

This sequence belongs to the DNA glycosylase MPG family.

The polypeptide is Putative 3-methyladenine DNA glycosylase (Rhodococcus jostii (strain RHA1)).